Reading from the N-terminus, the 627-residue chain is tRNA uridine 5-carboxymethylaminomethyl modification enzyme MnmG (627 aa).

FAD is bound by residues 16-21 (GAGHAG), Val128, and Ser183. 275–289 (GPRYCPSIEDKVMRF) contacts NAD(+). Gln372 lines the FAD pocket.

The protein belongs to the MnmG family. In terms of assembly, homodimer. Heterotetramer of two MnmE and two MnmG subunits. FAD serves as cofactor.

The protein localises to the cytoplasm. In terms of biological role, NAD-binding protein involved in the addition of a carboxymethylaminomethyl (cmnm) group at the wobble position (U34) of certain tRNAs, forming tRNA-cmnm(5)s(2)U34. The sequence is that of tRNA uridine 5-carboxymethylaminomethyl modification enzyme MnmG from Geobacter sulfurreducens (strain ATCC 51573 / DSM 12127 / PCA).